The following is a 277-amino-acid chain: 2-dehydro-3-deoxyphosphooctonate aldolase (277 aa).

The protein belongs to the KdsA family.

Its subcellular location is the cytoplasm. The catalysed reaction is D-arabinose 5-phosphate + phosphoenolpyruvate + H2O = 3-deoxy-alpha-D-manno-2-octulosonate-8-phosphate + phosphate. The protein operates within carbohydrate biosynthesis; 3-deoxy-D-manno-octulosonate biosynthesis; 3-deoxy-D-manno-octulosonate from D-ribulose 5-phosphate: step 2/3. It functions in the pathway bacterial outer membrane biogenesis; lipopolysaccharide biosynthesis. In Dichelobacter nodosus (strain VCS1703A), this protein is 2-dehydro-3-deoxyphosphooctonate aldolase.